A 507-amino-acid polypeptide reads, in one-letter code: Hippocampus abundant transcript-like protein 1 (507 aa).

The segment at 1 to 22 (MSTDGESPEEPGWKAVASPKAS) is disordered. Residues 1–51 (MSTDGESPEEPGWKAVASPKASAMPEKRGSAQAASSSWLQGFGQPSVYHAA) lie on the Extracellular side of the membrane. A helical transmembrane segment spans residues 52-72 (FVIFFEFFAWGLLTTPMLTVL). The Cytoplasmic segment spans residues 73 to 84 (HETFPQHTFLMN). Residues 85–105 (GLIQGVKGLLSFLSAPLIGAL) form a helical membrane-spanning segment. Topologically, residues 106 to 113 (SDVWGRKP) are extracellular. The helical transmembrane segment at 114–134 (FLLGTVFFTCFPIPLMRISPW) threads the bilayer. At 135–136 (WY) the chain is on the cytoplasmic side. Residues 137 to 157 (FGMISVSGVFSVTFSVIFAYV) form a helical membrane-spanning segment. Over 158-170 (ADFTQEHERSTAY) the chain is Extracellular. Residues 171-191 (GWVSATFAASLVSSPAIGTYL) traverse the membrane as a helical segment. At 192 to 198 (SSNYGDS) the chain is on the cytoplasmic side. A helical membrane pass occupies residues 199-219 (LVVLVATVVALLDICFILVAV). At 220–257 (PESLPEKIRPASWGAQISWKQADPFASLKKVGKDSTVL) the chain is on the extracellular side. A helical transmembrane segment spans residues 258–278 (LICITVFLSYLPEAGQYSSFF). Topologically, residues 279-283 (LYLRQ) are cytoplasmic. The helical transmembrane segment at 284–304 (VIGFGSVKIVAFIAMVGILSI) threads the bilayer. The Extracellular portion of the chain corresponds to 305-323 (LAQTVFLSKLMRSLGNKNT). The helical transmembrane segment at 324-344 (VLLGLGFQILQLAWYGFGAQA) threads the bilayer. The Cytoplasmic portion of the chain corresponds to 345-347 (WMM). Residues 348-368 (WAAGTVAAMSSITFPAVSALI) form a helical membrane-spanning segment. Residues 369 to 389 (SRNAESDQQGVAQGIITGIRG) are Extracellular-facing. Residues 390-410 (LCNGLGPALYGFIFYLFHVEL) traverse the membrane as a helical segment. Over 411–430 (NELGPKLDSDNDPLQGAFIP) the chain is Cytoplasmic. Residues 431-451 (GPPFLFGACIVLMSFLVALFI) form a helical membrane-spanning segment. The Extracellular segment spans residues 452–507 (PEYRKTGGVQKHNNSISGSLSTPPERGSDEDIEPLLQDSNIWELSSEEPGNQCTEL). Residues 462-473 (KHNNSISGSLST) are compositionally biased toward polar residues. The tract at residues 462 to 483 (KHNNSISGSLSTPPERGSDEDI) is disordered. The N-linked (GlcNAc...) asparagine glycan is linked to Asn464.

Belongs to the major facilitator superfamily.

The protein resides in the membrane. The chain is Hippocampus abundant transcript-like protein 1 from Rattus norvegicus (Rat).